The sequence spans 328 residues: Ribosomal protein L11 methyltransferase (328 aa).

S-adenosyl-L-methionine-binding residues include Thr-153, Gly-174, Asp-196, and Asn-263.

This sequence belongs to the methyltransferase superfamily. PrmA family.

It is found in the cytoplasm. It carries out the reaction L-lysyl-[protein] + 3 S-adenosyl-L-methionine = N(6),N(6),N(6)-trimethyl-L-lysyl-[protein] + 3 S-adenosyl-L-homocysteine + 3 H(+). In terms of biological role, methylates ribosomal protein L11. This is Ribosomal protein L11 methyltransferase from Chloroflexus aurantiacus (strain ATCC 29366 / DSM 635 / J-10-fl).